Reading from the N-terminus, the 392-residue chain is Lipase (392 aa).

An N-terminal signal peptide occupies residues 1 to 26; sequence MVSFISISQGVSLCLLVSSMMLGSSA. Residues 27-95 constitute a propeptide that is removed on maturation; that stretch reads VPVSGKSGSS…GGNLTSIGKR (69 aa). The interval 50-69 is disordered; that stretch reads PLISSRCAPPSNKGSKSDLQ. Disulfide bonds link cysteine 152/cysteine 391, cysteine 163/cysteine 166, and cysteine 358/cysteine 367. Serine 268 (nucleophile) is an active-site residue. Aspartate 327 serves as the catalytic Charge relay system. Aspartate 379 lines the Ca(2+) pocket. Histidine 380 serves as the catalytic Charge relay system.

The protein belongs to the AB hydrolase superfamily. Lipase family.

Its subcellular location is the secreted. It localises to the extracellular space. The catalysed reaction is a triacylglycerol + H2O = a diacylglycerol + a fatty acid + H(+). Its activity is regulated as follows. Lipase activity is maximal at a lipid-water interface (interfacial activation), probably by an induced conformational change that results in an increased accessibility of the active site to the substrate. Hydrolyzes ester bonds of triglycerides as well as of their derived partial glycerides with a strong 1,3-positional specificity. This Rhizopus niveus protein is Lipase.